The primary structure comprises 339 residues: 3-isopropylmalate dehydrogenase (339 aa).

The substrate site is built by R88, R98, R122, and D212. Mg(2+) is bound by residues D212, D236, and D240. Residue 272-284 (GSAPDIAGKGIAD) participates in NAD(+) binding.

Belongs to the isocitrate and isopropylmalate dehydrogenases family. LeuB type 2 subfamily. Homodimer. The cofactor is Mg(2+). Requires Mn(2+) as cofactor.

It localises to the cytoplasm. It carries out the reaction (2R,3S)-3-isopropylmalate + NAD(+) = 4-methyl-2-oxopentanoate + CO2 + NADH. Its pathway is amino-acid biosynthesis; L-leucine biosynthesis; L-leucine from 3-methyl-2-oxobutanoate: step 3/4. Its function is as follows. Catalyzes the oxidation of 3-carboxy-2-hydroxy-4-methylpentanoate (3-isopropylmalate) to 3-carboxy-4-methyl-2-oxopentanoate. The product decarboxylates to 4-methyl-2 oxopentanoate. The sequence is that of 3-isopropylmalate dehydrogenase from Corynebacterium aurimucosum (strain ATCC 700975 / DSM 44827 / CIP 107346 / CN-1) (Corynebacterium nigricans).